Consider the following 320-residue polypeptide: Cytosolic Fe-S cluster assembly factor NUBP1 (320 aa).

Met1 bears the N-acetylmethionine mark. [4Fe-4S] cluster-binding residues include Cys8, Cys22, Cys25, and Cys31. Position 62–69 (62–69 (GKGGVGKS)) interacts with ATP. [4Fe-4S] cluster-binding residues include Cys235 and Cys238.

Belongs to the Mrp/NBP35 ATP-binding proteins family. NUBP1/NBP35 subfamily. As to quaternary structure, heterotetramer of 2 NUBP1 and 2 NUBP2 chains. Interacts with KIFC1. Interacts with the BBS/CCT complex subunit CCT1. The cofactor is [4Fe-4S] cluster.

Its subcellular location is the cytoplasm. It localises to the nucleus. The protein localises to the cell projection. It is found in the cytoskeleton. The protein resides in the cilium axoneme. Its subcellular location is the cilium basal body. It localises to the microtubule organizing center. The protein localises to the centrosome. It is found in the centriole. Functionally, component of the cytosolic iron-sulfur (Fe/S) protein assembly (CIA) machinery. Required for maturation of extramitochondrial Fe-S proteins. The NUBP1-NUBP2 heterotetramer forms a Fe-S scaffold complex, mediating the de novo assembly of an Fe-S cluster and its transfer to target apoproteins. Implicated in the regulation of centrosome duplication. Negatively regulates cilium formation and structure. This chain is Cytosolic Fe-S cluster assembly factor NUBP1, found in Bos taurus (Bovine).